Consider the following 376-residue polypeptide: Carbamoyl phosphate synthase small chain (376 aa).

A CPSase region spans residues 1–187 (MRAFLALEDG…AADGAYAWPG (187 aa)). Positions 45, 239, and 241 each coordinate L-glutamine. Positions 191–376 (RLVVYDYGIK…RGMVREAVGR (186 aa)) constitute a Glutamine amidotransferase type-1 domain. The Nucleophile role is filled by Cys266. 5 residues coordinate L-glutamine: Leu267, Gln270, Asn308, Gly310, and Phe311. Catalysis depends on residues His349 and Glu351.

Belongs to the CarA family. In terms of assembly, composed of two chains; the small (or glutamine) chain promotes the hydrolysis of glutamine to ammonia, which is used by the large (or ammonia) chain to synthesize carbamoyl phosphate. Tetramer of heterodimers (alpha,beta)4.

The catalysed reaction is hydrogencarbonate + L-glutamine + 2 ATP + H2O = carbamoyl phosphate + L-glutamate + 2 ADP + phosphate + 2 H(+). The enzyme catalyses L-glutamine + H2O = L-glutamate + NH4(+). Its pathway is amino-acid biosynthesis; L-arginine biosynthesis; carbamoyl phosphate from bicarbonate: step 1/1. The protein operates within pyrimidine metabolism; UMP biosynthesis via de novo pathway; (S)-dihydroorotate from bicarbonate: step 1/3. Small subunit of the glutamine-dependent carbamoyl phosphate synthetase (CPSase). CPSase catalyzes the formation of carbamoyl phosphate from the ammonia moiety of glutamine, carbonate, and phosphate donated by ATP, constituting the first step of 2 biosynthetic pathways, one leading to arginine and/or urea and the other to pyrimidine nucleotides. The small subunit (glutamine amidotransferase) binds and cleaves glutamine to supply the large subunit with the substrate ammonia. This is Carbamoyl phosphate synthase small chain from Nitratidesulfovibrio vulgaris (strain DSM 19637 / Miyazaki F) (Desulfovibrio vulgaris).